Consider the following 604-residue polypeptide: 2-isopropylmalate synthase 2, mitochondrial (604 aa).

The N-terminal 50 residues, 1–50, are a transit peptide targeting the mitochondrion; sequence MVKHSFIALAEHASKLRRSIPPVKLTYKNMLRDPSVKYRAFAPPKMVKRI. The 276-residue stretch at 60–335 folds into the Pyruvate carboxyltransferase domain; sequence PRWLSTDLRD…SPNLDFSDLT (276 aa). The a divalent metal cation site is built by Asp-69, His-274, His-276, and Asn-310.

This sequence belongs to the alpha-IPM synthase/homocitrate synthase family. LeuA type 2 subfamily. Homodimer. A divalent metal cation is required as a cofactor.

It is found in the mitochondrion. The catalysed reaction is 3-methyl-2-oxobutanoate + acetyl-CoA + H2O = (2S)-2-isopropylmalate + CoA + H(+). It participates in amino-acid biosynthesis; L-leucine biosynthesis; L-leucine from 3-methyl-2-oxobutanoate: step 1/4. Its function is as follows. Catalyzes the condensation of the acetyl group of acetyl-CoA with 3-methyl-2-oxobutanoate (2-oxoisovalerate) to form 3-carboxy-3-hydroxy-4-methylpentanoate (2-isopropylmalate). Redundant to LEU4, responsible for about 20% of alpha-IPMS activity. Involved in leucine synthesis. The chain is 2-isopropylmalate synthase 2, mitochondrial from Saccharomyces cerevisiae (strain ATCC 204508 / S288c) (Baker's yeast).